The chain runs to 607 residues: Elongation factor 4 (607 aa).

The tr-type G domain maps to 11 to 193 (SKIRNFSIIA…QIVEKVPAPA (183 aa)). GTP contacts are provided by residues 23-28 (DHGKST) and 140-143 (NKID).

It belongs to the TRAFAC class translation factor GTPase superfamily. Classic translation factor GTPase family. LepA subfamily.

The protein resides in the cell membrane. It catalyses the reaction GTP + H2O = GDP + phosphate + H(+). In terms of biological role, required for accurate and efficient protein synthesis under certain stress conditions. May act as a fidelity factor of the translation reaction, by catalyzing a one-codon backward translocation of tRNAs on improperly translocated ribosomes. Back-translocation proceeds from a post-translocation (POST) complex to a pre-translocation (PRE) complex, thus giving elongation factor G a second chance to translocate the tRNAs correctly. Binds to ribosomes in a GTP-dependent manner. The chain is Elongation factor 4 from Bacillus cereus (strain B4264).